The following is a 307-amino-acid chain: Secondary metabolism regulator LAE1 (307 aa).

This sequence belongs to the methyltransferase superfamily. LaeA methyltransferase family. As to quaternary structure, component of the heterotrimeric velvet complex composed of LAE1, VEL1 and VEL2; VEL1 acting as a bridging protein between LAE1 and VEL2.

The protein resides in the nucleus. The enzyme catalyses L-methionyl-[protein] + S-adenosyl-L-methionine = S-methyl-L-methionyl-[protein] + S-adenosyl-L-homocysteine. Methyltransferase that performs automethylation. No other methyl-accepting substrate has been identified yet. Component of the velvet transcription factor complex that acts as a global regulator for secondary metabolite gene expression. Controls the expression of the T-toxin gene cluster. Promotes oxidative stress tolerance and acts as a virulence factors during infection. Negatively regulate mycelial pigmentation and controls sexual development, as well as asexual development during vegetative growth. This is Secondary metabolism regulator LAE1 from Cochliobolus heterostrophus (strain C5 / ATCC 48332 / race O) (Southern corn leaf blight fungus).